A 195-amino-acid chain; its full sequence is Imidazoleglycerol-phosphate dehydratase (195 aa).

This sequence belongs to the imidazoleglycerol-phosphate dehydratase family.

The protein resides in the cytoplasm. The catalysed reaction is D-erythro-1-(imidazol-4-yl)glycerol 3-phosphate = 3-(imidazol-4-yl)-2-oxopropyl phosphate + H2O. The protein operates within amino-acid biosynthesis; L-histidine biosynthesis; L-histidine from 5-phospho-alpha-D-ribose 1-diphosphate: step 6/9. The sequence is that of Imidazoleglycerol-phosphate dehydratase from Clostridium botulinum (strain Alaska E43 / Type E3).